The primary structure comprises 426 residues: Serine--tRNA ligase (426 aa).

An L-serine-binding site is contributed by 233 to 235 (TAE). 264 to 266 (RSE) provides a ligand contact to ATP. Glu287 serves as a coordination point for L-serine. 351–354 (EISS) serves as a coordination point for ATP. Ser387 lines the L-serine pocket.

Belongs to the class-II aminoacyl-tRNA synthetase family. Type-1 seryl-tRNA synthetase subfamily. In terms of assembly, homodimer. The tRNA molecule binds across the dimer.

The protein localises to the cytoplasm. The enzyme catalyses tRNA(Ser) + L-serine + ATP = L-seryl-tRNA(Ser) + AMP + diphosphate + H(+). It carries out the reaction tRNA(Sec) + L-serine + ATP = L-seryl-tRNA(Sec) + AMP + diphosphate + H(+). It participates in aminoacyl-tRNA biosynthesis; selenocysteinyl-tRNA(Sec) biosynthesis; L-seryl-tRNA(Sec) from L-serine and tRNA(Sec): step 1/1. In terms of biological role, catalyzes the attachment of serine to tRNA(Ser). Is also able to aminoacylate tRNA(Sec) with serine, to form the misacylated tRNA L-seryl-tRNA(Sec), which will be further converted into selenocysteinyl-tRNA(Sec). The polypeptide is Serine--tRNA ligase (Azotobacter vinelandii (strain DJ / ATCC BAA-1303)).